Reading from the N-terminus, the 663-residue chain is Protein-arginine deiminase type-1 (663 aa).

The Ca(2+) site is built by N153, D155, D157, D165, D176, D179, Q351, E353, K364, D371, S372, N375, F409, and L412. C645 serves as the catalytic Nucleophile.

The protein belongs to the protein arginine deiminase family. Monomer. Requires Ca(2+) as cofactor. In terms of tissue distribution, detected in epidermal keratinocytes (at protein level). Epidermis, prostate, testis, placenta, spleen and thymus.

The protein localises to the cytoplasm. It carries out the reaction L-arginyl-[protein] + H2O = L-citrullyl-[protein] + NH4(+). Its function is as follows. Catalyzes the deimination of arginine residues of proteins. The protein is Protein-arginine deiminase type-1 (PADI1) of Homo sapiens (Human).